The following is a 192-amino-acid chain: Ras-like GTP-binding protein Rho1 (192 aa).

Residue 12 to 19 (GDGACGKT) participates in GTP binding. Residues 34 to 42 (YVPTVFENY) carry the Effector region motif. Residues 59-63 (DTAGQ) and 117-120 (NKKD) each bind GTP. Cys189 carries the cysteine methyl ester modification. The S-geranylgeranyl cysteine moiety is linked to residue Cys189. Residues 190 to 192 (LLL) constitute a propeptide, removed in mature form.

The protein belongs to the small GTPase superfamily. Rho family. Interacts with capu. Interacts (via REM repeats) with Pkn (via N-terminus). Interacts (via N-terminus) with wash (via N-terminus). May interact with dia/diaphanous (via CBD/FH3 domain). In terms of tissue distribution, expressed in hemocytes (at protein level).

The protein localises to the cell membrane. Its subcellular location is the cytoplasm. It is found in the cytoskeleton. The protein resides in the apical cell membrane. It localises to the lateral cell membrane. Its function is as follows. Has a role in regulating actin cytoskeletal organization: required during early development for proper execution of morphogenetic movements of individual cells and groups of cells important for the formation of the embryonic body plan. Plays a role in regulating dorsal closure during embryogenesis. During axis elongation, required for Rho-kinase Rok planar polarity and adherens junction localization as well as for generating a planar polarized distribution of the actin-binding protein Shrm. During embryogenesis, acts upstream of wash to regulate the developmental migration of tail hemocytes anteriorly along the ventral midline. May have a role in eye development. Involved in targeted recruitment of dia/diaphanous to apical membranes of polarized epithelial cells. This is Ras-like GTP-binding protein Rho1 from Drosophila melanogaster (Fruit fly).